Reading from the N-terminus, the 352-residue chain is Holliday junction branch migration complex subunit RuvB (352 aa).

A large ATPase domain (RuvB-L) region spans residues Thr-5–Tyr-191. ATP contacts are provided by residues Leu-30, Arg-31, Gly-72, Lys-75, Thr-76, Thr-77, Glu-138–Tyr-140, Arg-181, Tyr-191, and Arg-228. Thr-76 serves as a coordination point for Mg(2+). The interval Thr-192 to Asp-262 is small ATPAse domain (RuvB-S). Residues Pro-265–Gln-352 form a head domain (RuvB-H) region. DNA is bound by residues Arg-301, Arg-320, and Arg-325.

The protein belongs to the RuvB family. Homohexamer. Forms an RuvA(8)-RuvB(12)-Holliday junction (HJ) complex. HJ DNA is sandwiched between 2 RuvA tetramers; dsDNA enters through RuvA and exits via RuvB. An RuvB hexamer assembles on each DNA strand where it exits the tetramer. Each RuvB hexamer is contacted by two RuvA subunits (via domain III) on 2 adjacent RuvB subunits; this complex drives branch migration. In the full resolvosome a probable DNA-RuvA(4)-RuvB(12)-RuvC(2) complex forms which resolves the HJ.

It is found in the cytoplasm. The enzyme catalyses ATP + H2O = ADP + phosphate + H(+). The RuvA-RuvB-RuvC complex processes Holliday junction (HJ) DNA during genetic recombination and DNA repair, while the RuvA-RuvB complex plays an important role in the rescue of blocked DNA replication forks via replication fork reversal (RFR). RuvA specifically binds to HJ cruciform DNA, conferring on it an open structure. The RuvB hexamer acts as an ATP-dependent pump, pulling dsDNA into and through the RuvAB complex. RuvB forms 2 homohexamers on either side of HJ DNA bound by 1 or 2 RuvA tetramers; 4 subunits per hexamer contact DNA at a time. Coordinated motions by a converter formed by DNA-disengaged RuvB subunits stimulates ATP hydrolysis and nucleotide exchange. Immobilization of the converter enables RuvB to convert the ATP-contained energy into a lever motion, pulling 2 nucleotides of DNA out of the RuvA tetramer per ATP hydrolyzed, thus driving DNA branch migration. The RuvB motors rotate together with the DNA substrate, which together with the progressing nucleotide cycle form the mechanistic basis for DNA recombination by continuous HJ branch migration. Branch migration allows RuvC to scan DNA until it finds its consensus sequence, where it cleaves and resolves cruciform DNA. In Janthinobacterium sp. (strain Marseille) (Minibacterium massiliensis), this protein is Holliday junction branch migration complex subunit RuvB.